A 75-amino-acid chain; its full sequence is ATP synthase subunit c (75 aa).

A run of 2 helical transmembrane segments spans residues phenylalanine 8–isoleucine 28 and alanine 54–valine 74.

Belongs to the ATPase C chain family. F-type ATPases have 2 components, F(1) - the catalytic core - and F(0) - the membrane proton channel. F(1) has five subunits: alpha(3), beta(3), gamma(1), delta(1), epsilon(1). F(0) has three main subunits: a(1), b(2) and c(10-14). The alpha and beta chains form an alternating ring which encloses part of the gamma chain. F(1) is attached to F(0) by a central stalk formed by the gamma and epsilon chains, while a peripheral stalk is formed by the delta and b chains.

The protein resides in the cell inner membrane. Functionally, f(1)F(0) ATP synthase produces ATP from ADP in the presence of a proton or sodium gradient. F-type ATPases consist of two structural domains, F(1) containing the extramembraneous catalytic core and F(0) containing the membrane proton channel, linked together by a central stalk and a peripheral stalk. During catalysis, ATP synthesis in the catalytic domain of F(1) is coupled via a rotary mechanism of the central stalk subunits to proton translocation. Key component of the F(0) channel; it plays a direct role in translocation across the membrane. A homomeric c-ring of between 10-14 subunits forms the central stalk rotor element with the F(1) delta and epsilon subunits. This chain is ATP synthase subunit c, found in Neorickettsia sennetsu (strain ATCC VR-367 / Miyayama) (Ehrlichia sennetsu).